Here is a 305-residue protein sequence, read N- to C-terminus: NAD kinase (305 aa).

D76 acts as the Proton acceptor in catalysis. NAD(+) is bound by residues 76-77 (DG), 150-151 (ND), R161, and D180.

Belongs to the NAD kinase family. The cofactor is a divalent metal cation.

The protein localises to the cytoplasm. The enzyme catalyses NAD(+) + ATP = ADP + NADP(+) + H(+). Its function is as follows. Involved in the regulation of the intracellular balance of NAD and NADP, and is a key enzyme in the biosynthesis of NADP. Catalyzes specifically the phosphorylation on 2'-hydroxyl of the adenosine moiety of NAD to yield NADP. This is NAD kinase from Treponema pallidum (strain Nichols).